A 216-amino-acid chain; its full sequence is Elongation factor 1-beta (216 aa).

The segment at 71–131 is disordered; that stretch reads GQASGVSASS…AKKKESGKSS (61 aa). Over residues 73–89 the composition is skewed to low complexity; it reads ASGVSASSAPAAAAPAA. Positions 92 to 107 are enriched in acidic residues; sequence DEDDDDDMDLFGDETE. Over residues 108 to 128 the composition is skewed to basic and acidic residues; that stretch reads EDKKAAAEREAAKPAKKKESG.

Belongs to the EF-1-beta/EF-1-delta family. EF-1 is composed of 4 subunits: alpha, beta (1B-alpha=beta'), delta (1B-beta), and gamma (1B-gamma).

Functionally, EF-1-beta and EF-1-beta' stimulate the exchange of GDP bound to EF-1-alpha to GTP. This is Elongation factor 1-beta from Triticum aestivum (Wheat).